The sequence spans 142 residues: Galactose-binding lectin l-1 (142 aa).

A Galectin domain is found at 3–134 (FVEVKNLIMK…DATVKNISVN (132 aa)). 68-74 (WQEEQRD) serves as a coordination point for a beta-D-galactoside. An N-linked (GlcNAc...) asparagine glycan is attached at Asn-130.

Homodimer. In terms of processing, the N-terminus is blocked. In terms of tissue distribution, skin; highest expression in that of individuals showing resistance to infectious disease.

It is found in the secreted. Its function is as follows. Involved in host defense at the body surface. Causes agglutination of the Gram-positive bacterium S.difficile. Possesses calcium-independent hemagglutinating activity. This Anguilla japonica (Japanese eel) protein is Galactose-binding lectin l-1.